A 922-amino-acid polypeptide reads, in one-letter code: Golgi-associated RAB2 interactor protein 5B (922 aa).

6 disordered regions span residues 244–264 (DVRK…DRTH), 292–317 (QSSP…SPSH), 373–404 (TPYS…KAPS), 424–597 (AVPA…TQET), 758–830 (QPES…LRPS), and 842–869 (ATAR…LATV). The segment covering 292–305 (QSSPKACTSASDEA) has biased composition (polar residues). The segment covering 431 to 441 (KPPPGLAPPQK) has biased composition (pro residues). Composition is skewed to low complexity over residues 442–458 (APAA…VPAP) and 471–495 (KAPA…ASAV). Residues 496–507 (PAPPQKTPPPSQ) show a composition bias toward pro residues. A compositionally biased stretch (basic and acidic residues) spans 758–788 (QPESHTWVKEGKRPWGEMKEQPWGEMKEPPW).

It belongs to the GARIN family.

The sequence is that of Golgi-associated RAB2 interactor protein 5B from Homo sapiens (Human).